The sequence spans 525 residues: GMP synthase [glutamine-hydrolyzing] (525 aa).

Positions 8–207 (KILILDFGSQ…ALEICGCPAN (200 aa)) constitute a Glutamine amidotransferase type-1 domain. The Nucleophile role is filled by cysteine 85. Residues histidine 181 and glutamate 183 contribute to the active site. One can recognise a GMPS ATP-PPase domain in the interval 208–400 (WKPSSIIEDA…LGLPYDMLYR (193 aa)). Position 235-241 (235-241 (SGGVDSS)) interacts with ATP.

As to quaternary structure, homodimer.

It carries out the reaction XMP + L-glutamine + ATP + H2O = GMP + L-glutamate + AMP + diphosphate + 2 H(+). The protein operates within purine metabolism; GMP biosynthesis; GMP from XMP (L-Gln route): step 1/1. Catalyzes the synthesis of GMP from XMP. The polypeptide is GMP synthase [glutamine-hydrolyzing] (Shewanella pealeana (strain ATCC 700345 / ANG-SQ1)).